Reading from the N-terminus, the 245-residue chain is Adapter protein MecA (245 aa).

Belongs to the MecA family. Homodimer.

Enables the recognition and targeting of unfolded and aggregated proteins to the ClpC protease or to other proteins involved in proteolysis. The polypeptide is Adapter protein MecA (Streptococcus pneumoniae serotype 4 (strain ATCC BAA-334 / TIGR4)).